Reading from the N-terminus, the 134-residue chain is uncharacterized protein (134 aa).

A disordered region spans residues 59 to 92 (VSKPKRRSPHPHGNKAADKRKTTEKEPERKKRVG). Residues 61–71 (KPKRRSPHPHG) are compositionally biased toward basic residues. The segment covering 73–87 (KAADKRKTTEKEPER) has biased composition (basic and acidic residues).

This is an uncharacterized protein from Saccharomyces cerevisiae (strain ATCC 204508 / S288c) (Baker's yeast).